We begin with the raw amino-acid sequence, 176 residues long: ATP-dependent protease subunit HslV (176 aa).

Thr-5 is a catalytic residue. Na(+) is bound by residues Ser-161, Cys-164, and Thr-167.

The protein belongs to the peptidase T1B family. HslV subfamily. As to quaternary structure, a double ring-shaped homohexamer of HslV is capped on each side by a ring-shaped HslU homohexamer. The assembly of the HslU/HslV complex is dependent on binding of ATP.

It localises to the cytoplasm. It catalyses the reaction ATP-dependent cleavage of peptide bonds with broad specificity.. Allosterically activated by HslU binding. Its function is as follows. Protease subunit of a proteasome-like degradation complex believed to be a general protein degrading machinery. The protein is ATP-dependent protease subunit HslV of Desulfitobacterium hafniense (strain Y51).